The sequence spans 96 residues: Large ribosomal subunit protein uL23 (96 aa).

The protein belongs to the universal ribosomal protein uL23 family. In terms of assembly, part of the 50S ribosomal subunit. Contacts protein L29, and trigger factor when it is bound to the ribosome.

In terms of biological role, one of the early assembly proteins it binds 23S rRNA. One of the proteins that surrounds the polypeptide exit tunnel on the outside of the ribosome. Forms the main docking site for trigger factor binding to the ribosome. The polypeptide is Large ribosomal subunit protein uL23 (Ruthia magnifica subsp. Calyptogena magnifica).